The chain runs to 232 residues: 7-cyano-7-deazaguanine synthase (232 aa).

Residue 8-18 coordinates ATP; it reads FSGGQDSTTCL. Residues C188, C197, C200, and C203 each contribute to the Zn(2+) site.

It belongs to the QueC family. Zn(2+) serves as cofactor.

The catalysed reaction is 7-carboxy-7-deazaguanine + NH4(+) + ATP = 7-cyano-7-deazaguanine + ADP + phosphate + H2O + H(+). It participates in purine metabolism; 7-cyano-7-deazaguanine biosynthesis. Functionally, catalyzes the ATP-dependent conversion of 7-carboxy-7-deazaguanine (CDG) to 7-cyano-7-deazaguanine (preQ(0)). The polypeptide is 7-cyano-7-deazaguanine synthase (Buchnera aphidicola subsp. Schizaphis graminum (strain Sg)).